Reading from the N-terminus, the 567-residue chain is Probable E3 ubiquitin-protein ligase ARI8 (567 aa).

A disordered region spans residues 1-27; that stretch reads MEADDDFYSGTENYSDYADSDEDDADG. Over residues 18-27 the composition is skewed to acidic residues; that stretch reads ADSDEDDADG. The tract at residues 124 to 337 is TRIAD supradomain; the sequence is GELDCGICFE…GGFYACNRYE (214 aa). Residues cysteine 128, cysteine 131, cysteine 145, histidine 147, cysteine 150, cysteine 153, cysteine 173, cysteine 178, cysteine 217, cysteine 222, cysteine 239, cysteine 241, cysteine 246, cysteine 249, histidine 254, cysteine 259, cysteine 286, and cysteine 289 each contribute to the Zn(2+) site. The segment at 128–178 adopts an RING-type 1 zinc-finger fold; it reads CGICFETFLSDKLHAAACGHPFCDSCWEGYITTAINDGPGCLTLRCPDPSC. Residues 197–259 form an IBR-type zinc finger; that stretch reads QKYTSYFVRS…AEEAHRPVDC (63 aa). The RING-type 2; atypical zinc finger occupies 286–316; sequence CPKCKRPIEKNQGCMHITCTPPCKFEFCWLC. Cysteine 299 is an active-site residue. 6 residues coordinate Zn(2+): cysteine 304, cysteine 308, cysteine 313, cysteine 316, histidine 323, and cysteine 333. A disordered region spans residues 514–543; the sequence is DAYDRTSSSKSLGGKTKGSSSKASSSDSSH. Positions 521-542 are enriched in low complexity; the sequence is SSKSLGGKTKGSSSKASSSDSS. The RanBP2-type zinc finger occupies 540–567; sequence DSSHWPCEYCTYVNPRSTTICQMCEHGR.

This sequence belongs to the RBR family. Ariadne subfamily. It depends on Zn(2+) as a cofactor. In terms of tissue distribution, ubiquitous.

The enzyme catalyses [E2 ubiquitin-conjugating enzyme]-S-ubiquitinyl-L-cysteine + [acceptor protein]-L-lysine = [E2 ubiquitin-conjugating enzyme]-L-cysteine + [acceptor protein]-N(6)-ubiquitinyl-L-lysine.. The protein operates within protein modification; protein ubiquitination. Functionally, might act as an E3 ubiquitin-protein ligase, or as part of E3 complex, which accepts ubiquitin from specific E2 ubiquitin-conjugating enzymes and then transfers it to substrates. This is Probable E3 ubiquitin-protein ligase ARI8 (ARI8) from Arabidopsis thaliana (Mouse-ear cress).